The sequence spans 324 residues: Fructose-1,6-bisphosphatase class 1 (324 aa).

Mg(2+) is bound by residues glutamate 88, aspartate 107, leucine 109, and aspartate 110. Substrate-binding positions include 110-113 (DGSS), asparagine 199, and lysine 265. Mg(2+) is bound at residue glutamate 271.

It belongs to the FBPase class 1 family. As to quaternary structure, homotetramer. Requires Mg(2+) as cofactor.

It localises to the cytoplasm. The catalysed reaction is beta-D-fructose 1,6-bisphosphate + H2O = beta-D-fructose 6-phosphate + phosphate. Its pathway is carbohydrate biosynthesis; gluconeogenesis. The protein is Fructose-1,6-bisphosphatase class 1 of Neisseria meningitidis serogroup C (strain 053442).